A 54-amino-acid polypeptide reads, in one-letter code: U-myrmicitoxin(01)-Tb5a (54 aa).

The first 26 residues, 1 to 26 (MQLSHLLLAFAMIFVMTIMYAPQVQA), serve as a signal peptide directing secretion. Residues 27–38 (DAWADANADADV) constitute a propeptide that is removed on maturation.

Belongs to the formicidae venom precursor-01 superfamily. Contains 1 disulfide bond. In terms of tissue distribution, expressed by the venom gland.

It is found in the secreted. The chain is U-myrmicitoxin(01)-Tb5a from Tetramorium bicarinatum (Tramp ant).